The primary structure comprises 640 residues: Chaperone protein DnaK (640 aa).

Thr-199 carries the post-translational modification Phosphothreonine; by autocatalysis. The segment at 603–640 is disordered; sequence YTQQAEEPQPQKEEGKAAEEDVVDAEFEEVKEDKNKAS. Positions 611-621 are enriched in basic and acidic residues; sequence QPQKEEGKAAE. Acidic residues predominate over residues 622-632; the sequence is EDVVDAEFEEV.

Belongs to the heat shock protein 70 family.

Functionally, acts as a chaperone. The polypeptide is Chaperone protein DnaK (Nitrosococcus oceani (strain ATCC 19707 / BCRC 17464 / JCM 30415 / NCIMB 11848 / C-107)).